Reading from the N-terminus, the 403-residue chain is S-adenosylmethionine synthase (403 aa).

Histidine 17 serves as a coordination point for ATP. Residue aspartate 19 coordinates Mg(2+). Position 45 (glutamate 45) interacts with K(+). 2 residues coordinate L-methionine: glutamate 58 and glutamine 104. The interval 104 to 114 is flexible loop; it reads QSPDIAQGVDT. ATP contacts are provided by residues 179–181, 250–251, aspartate 259, 265–266, alanine 282, and lysine 286; these read DGK, KF, and RK. Aspartate 259 serves as a coordination point for L-methionine. Lysine 290 provides a ligand contact to L-methionine.

It belongs to the AdoMet synthase family. In terms of assembly, homotetramer; dimer of dimers. The cofactor is Mg(2+). Requires K(+) as cofactor.

It is found in the cytoplasm. The enzyme catalyses L-methionine + ATP + H2O = S-adenosyl-L-methionine + phosphate + diphosphate. Its pathway is amino-acid biosynthesis; S-adenosyl-L-methionine biosynthesis; S-adenosyl-L-methionine from L-methionine: step 1/1. Catalyzes the formation of S-adenosylmethionine (AdoMet) from methionine and ATP. The overall synthetic reaction is composed of two sequential steps, AdoMet formation and the subsequent tripolyphosphate hydrolysis which occurs prior to release of AdoMet from the enzyme. In Mycobacterium bovis (strain ATCC BAA-935 / AF2122/97), this protein is S-adenosylmethionine synthase.